The chain runs to 206 residues: MEPVASNIQVLLQAAEFLERREREAEHGYASLCPHHSPGTVCRRRKAPLQAPGALNSGRHVHNELEKRRRAQLKRCLEQLRQQMPLGVDHTRYTTLSLLRGARMHIQKLEEQEQQAQRLKEKLRSRQQSLQQQLEQLQGLLGVRERDRLRADSLDSSGLSSERFDSDQEDLEVDVESLVFGTETELLQSFSAGQEHSYSHSTGTWL.

The tract at residues 8-25 (IQVLLQAAEFLERREREA) is interaction with SIN3A and SIN3B. Residues 57–109 (SGRHVHNELEKRRRAQLKRCLEQLRQQMPLGVDHTRYTTLSLLRGARMHIQKL) enclose the bHLH domain.

Efficient DNA binding requires dimerization with another bHLH protein. Binds DNA as a heterodimer with MAX. Interacts with SIN3A AND SIN3B. Interacts with RNF17.

Its subcellular location is the nucleus. Transcriptional repressor. Binds with MAX to form a sequence-specific DNA-binding protein complex which recognizes the core sequence 5'-CAC[GA]TG-3'. Antagonizes MYC transcriptional activity by competing for MAX and suppresses MYC dependent cell transformation. This chain is Max dimerization protein 3 (Mxd3), found in Rattus norvegicus (Rat).